The primary structure comprises 727 residues: Phosphoribosylformylglycinamidine synthase subunit PurL (727 aa).

Residue His47 is part of the active site. ATP is bound by residues Tyr50 and Lys82. Glu84 is a Mg(2+) binding site. Substrate-binding positions include 85–88 and Arg107; that span reads SHNH. His86 (proton acceptor) is an active-site residue. Position 108 (Asp108) interacts with Mg(2+). Residue Gln229 participates in substrate binding. Residue Asp257 coordinates Mg(2+). 301–303 contributes to the substrate binding site; it reads ESQ. 2 residues coordinate ATP: Asp486 and Gly523. Mg(2+) is bound at residue Asn524. Ser526 provides a ligand contact to substrate.

It belongs to the FGAMS family. Monomer. Part of the FGAM synthase complex composed of 1 PurL, 1 PurQ and 2 PurS subunits.

The protein localises to the cytoplasm. It catalyses the reaction N(2)-formyl-N(1)-(5-phospho-beta-D-ribosyl)glycinamide + L-glutamine + ATP + H2O = 2-formamido-N(1)-(5-O-phospho-beta-D-ribosyl)acetamidine + L-glutamate + ADP + phosphate + H(+). The protein operates within purine metabolism; IMP biosynthesis via de novo pathway; 5-amino-1-(5-phospho-D-ribosyl)imidazole from N(2)-formyl-N(1)-(5-phospho-D-ribosyl)glycinamide: step 1/2. Part of the phosphoribosylformylglycinamidine synthase complex involved in the purines biosynthetic pathway. Catalyzes the ATP-dependent conversion of formylglycinamide ribonucleotide (FGAR) and glutamine to yield formylglycinamidine ribonucleotide (FGAM) and glutamate. The FGAM synthase complex is composed of three subunits. PurQ produces an ammonia molecule by converting glutamine to glutamate. PurL transfers the ammonia molecule to FGAR to form FGAM in an ATP-dependent manner. PurS interacts with PurQ and PurL and is thought to assist in the transfer of the ammonia molecule from PurQ to PurL. The polypeptide is Phosphoribosylformylglycinamidine synthase subunit PurL (Petrotoga mobilis (strain DSM 10674 / SJ95)).